Reading from the N-terminus, the 283-residue chain is NFU1 iron-sulfur cluster scaffold homolog, mitochondrial (283 aa).

The N-terminal 30 residues, 1 to 30, are a transit peptide targeting the mitochondrion; that stretch reads MSKFLSQAALNTLRNTRLGSRQLVRSFAGI. The tract at residues 182-250 is nifU; that stretch reads IKELLDTRIR…IPEVESVEQV (69 aa). Positions 219 and 222 each coordinate [4Fe-4S] cluster.

Belongs to the NifU family.

It localises to the mitochondrion. In terms of biological role, molecular scaffold for [Fe-S] cluster assembly of mitochondrial iron-sulfur proteins. In Drosophila erecta (Fruit fly), this protein is NFU1 iron-sulfur cluster scaffold homolog, mitochondrial.